The primary structure comprises 40 residues: Large ribosomal subunit protein bL36A (40 aa).

This sequence belongs to the bacterial ribosomal protein bL36 family.

This chain is Large ribosomal subunit protein bL36A, found in Renibacterium salmoninarum (strain ATCC 33209 / DSM 20767 / JCM 11484 / NBRC 15589 / NCIMB 2235).